Here is a 100-residue protein sequence, read N- to C-terminus: Aspartyl/glutamyl-tRNA(Asn/Gln) amidotransferase subunit C (100 aa).

This sequence belongs to the GatC family. Heterotrimer of A, B and C subunits.

The enzyme catalyses L-glutamyl-tRNA(Gln) + L-glutamine + ATP + H2O = L-glutaminyl-tRNA(Gln) + L-glutamate + ADP + phosphate + H(+). It carries out the reaction L-aspartyl-tRNA(Asn) + L-glutamine + ATP + H2O = L-asparaginyl-tRNA(Asn) + L-glutamate + ADP + phosphate + 2 H(+). Functionally, allows the formation of correctly charged Asn-tRNA(Asn) or Gln-tRNA(Gln) through the transamidation of misacylated Asp-tRNA(Asn) or Glu-tRNA(Gln) in organisms which lack either or both of asparaginyl-tRNA or glutaminyl-tRNA synthetases. The reaction takes place in the presence of glutamine and ATP through an activated phospho-Asp-tRNA(Asn) or phospho-Glu-tRNA(Gln). This chain is Aspartyl/glutamyl-tRNA(Asn/Gln) amidotransferase subunit C, found in Rickettsia rickettsii (strain Sheila Smith).